The following is a 408-amino-acid chain: Guanine nucleotide-binding protein alpha-14 subunit (408 aa).

Residues 38-45, 78-85, 201-205, 216-222, 241-245, 285-288, 325-328, and Ala-380 contribute to the GTP site; these read HSEELEAK, GGPSSGKS, NRISK, VHSRKAT, DVGGQ, FPNF, and NKVD. Positions 70 to 408 constitute a G-alpha domain; sequence SHIKILILGG…KANSKATGLS (339 aa). Residues 73-86 form a G1 motif region; the sequence is KILILGGPSSGKST. Ser-85 provides a ligand contact to Mg(2+). Residues 214–222 form a G2 motif region; the sequence is DIVHSRKAT. Position 222 (Thr-222) interacts with Mg(2+). The G3 motif stretch occupies residues 237-246; the sequence is LLMVDVGGQR. The interval 321–328 is G4 motif; that stretch reads LLFFNKVD. Positions 378 to 383 are G5 motif; that stretch reads TTATNT.

This sequence belongs to the G-alpha family. As to quaternary structure, g proteins are composed of 3 units; alpha, beta and gamma. The alpha chain contains the guanine nucleotide binding site.

In terms of biological role, guanine nucleotide-binding proteins (G proteins) are involved as modulators or transducers in various transmembrane signaling systems. This is Guanine nucleotide-binding protein alpha-14 subunit (gpa-14) from Caenorhabditis briggsae.